The sequence spans 182 residues: Nucleosome assembly protein 1-like 5 (182 aa).

The interval 1–71 (MADSENQGPA…APKPKNDFIE (71 aa)) is disordered. Composition is skewed to low complexity over residues 7–21 (QGPAEPSQAAAAAEA) and 28–49 (AEGGAQGGDCDSAAGDPDSAAG). Residues 81 to 107 (VLALKKLQKRCDKIEAKFDKEFQALEK) adopt a coiled-coil conformation. A disordered region spans residues 134–182 (LEGEEEEEEEYEDDEEEGEDEEEEEAAAEAAAGAKHDDAHAEMPDDAKK). A compositionally biased stretch (acidic residues) spans 135-160 (EGEEEEEEEYEDDEEEGEDEEEEEAA). Residues 167–182 (AKHDDAHAEMPDDAKK) are compositionally biased toward basic and acidic residues.

The protein belongs to the nucleosome assembly protein (NAP) family. As to expression, predominantly expressed in brain.

The protein localises to the nucleus. The polypeptide is Nucleosome assembly protein 1-like 5 (NAP1L5) (Homo sapiens (Human)).